The following is a 258-amino-acid chain: 3-deoxy-manno-octulosonate cytidylyltransferase (258 aa).

It belongs to the KdsB family.

It localises to the cytoplasm. It catalyses the reaction 3-deoxy-alpha-D-manno-oct-2-ulosonate + CTP = CMP-3-deoxy-beta-D-manno-octulosonate + diphosphate. The protein operates within nucleotide-sugar biosynthesis; CMP-3-deoxy-D-manno-octulosonate biosynthesis; CMP-3-deoxy-D-manno-octulosonate from 3-deoxy-D-manno-octulosonate and CTP: step 1/1. It functions in the pathway bacterial outer membrane biogenesis; lipopolysaccharide biosynthesis. Functionally, activates KDO (a required 8-carbon sugar) for incorporation into bacterial lipopolysaccharide in Gram-negative bacteria. In Pasteurella multocida (strain Pm70), this protein is 3-deoxy-manno-octulosonate cytidylyltransferase.